The chain runs to 50 residues: Protein PndA (50 aa).

Residues 5 to 25 (TFLMMLIVVCVTILCFVWMVR) form a helical membrane-spanning segment.

This sequence belongs to the Hok/Gef family.

The protein resides in the cell inner membrane. When overexpressed kill the cells from the inside by interfering with a vital function in the cell membrane. Its function is as follows. Toxic component of a type I toxin-antitoxin (TA) system. When expressed is involved in cellular Mg(2+) release and degradation of stable RNA. This Escherichia coli protein is Protein PndA (pndA).